The following is a 63-amino-acid chain: Large ribosomal subunit protein bL32c (63 aa).

Residues 39-63 are disordered; sequence SFSSGNEHPKPKGFSGQQTNNKIFE. Positions 53–63 are enriched in polar residues; it reads SGQQTNNKIFE.

It belongs to the bacterial ribosomal protein bL32 family.

It is found in the plastid. Its subcellular location is the chloroplast. The polypeptide is Large ribosomal subunit protein bL32c (Triticum aestivum (Wheat)).